The primary structure comprises 108 residues: UPF0145 protein LCABL_07110 (108 aa).

It belongs to the UPF0145 family.

The polypeptide is UPF0145 protein LCABL_07110 (Lacticaseibacillus casei (strain BL23) (Lactobacillus casei)).